We begin with the raw amino-acid sequence, 237 residues long: Peptidase E (237 aa).

Residues Ser-122, Asp-137, and His-159 each act as charge relay system in the active site.

This sequence belongs to the peptidase S51 family.

The protein resides in the cytoplasm. It carries out the reaction Dipeptidase E catalyzes the hydrolysis of dipeptides Asp-|-Xaa. It does not act on peptides with N-terminal Glu, Asn or Gln, nor does it cleave isoaspartyl peptides.. Its function is as follows. Hydrolyzes dipeptides containing N-terminal aspartate residues. May play a role in allowing the cell to use peptide aspartate to spare carbon otherwise required for the synthesis of the aspartate family of amino acids. The chain is Peptidase E from Shewanella baltica (strain OS185).